A 202-amino-acid polypeptide reads, in one-letter code: Na(+)-translocating NADH-quinone reductase subunit E (202 aa).

The next 6 membrane-spanning stretches (helical) occupy residues 11-31 (AVFVENMALAFFLGMCTFIAI), 35-55 (VETAIGLGIAVIVVQTITVPA), 81-101 (FLGLLSYIGVIAAIVQILEML), 114-134 (GVFLPLITVNCAIMAGSLFMV), 144-164 (TVYGVGSGFSWALAIAALAGI), and 180-200 (LGITFITIGLMSLGFMSFSGV).

Belongs to the NqrDE/RnfAE family. Composed of six subunits; NqrA, NqrB, NqrC, NqrD, NqrE and NqrF.

It is found in the cell inner membrane. The enzyme catalyses a ubiquinone + n Na(+)(in) + NADH + H(+) = a ubiquinol + n Na(+)(out) + NAD(+). NQR complex catalyzes the reduction of ubiquinone-1 to ubiquinol by two successive reactions, coupled with the transport of Na(+) ions from the cytoplasm to the periplasm. NqrA to NqrE are probably involved in the second step, the conversion of ubisemiquinone to ubiquinol. This Pseudomonas aeruginosa (strain LESB58) protein is Na(+)-translocating NADH-quinone reductase subunit E.